The following is a 226-amino-acid chain: MRLCVALDMASKDENLALVRELKGLDLWLKVGLRSYLRDGAKFIEELKGAGEFKIFLDLKLYDIPNTMADAAEVVSKIGVDMINLHASAGERAMKTVMERLNALQNRPLVLAVSALTSFSESEFEAVYNDTLSRSVRKFSQMSFEAGLDGMVCSVFESKLIKEVTNQNFITLCPGVRPFGESAGDQKRVANLVSAKQEDSDFIVVGRPIYENENPREICERILEQI.

Substrate contacts are provided by residues Asp8, Lys30, 58–67, Thr117, Arg177, Gln186, Gly206, and Arg207; that span reads DLKLYDIPNT. Lys60 acts as the Proton donor in catalysis.

The protein belongs to the OMP decarboxylase family. Type 1 subfamily. Homodimer.

It carries out the reaction orotidine 5'-phosphate + H(+) = UMP + CO2. Its pathway is pyrimidine metabolism; UMP biosynthesis via de novo pathway; UMP from orotate: step 2/2. In terms of biological role, catalyzes the decarboxylation of orotidine 5'-monophosphate (OMP) to uridine 5'-monophosphate (UMP). The sequence is that of Orotidine 5'-phosphate decarboxylase from Campylobacter concisus (strain 13826).